A 148-amino-acid polypeptide reads, in one-letter code: Ubiquitin-conjugating enzyme E2 11 (148 aa).

The 147-residue stretch at 1–147 folds into the UBC core domain; sequence MASKRILKEL…ARSWTQKYAM (147 aa). Cysteine 85 serves as the catalytic Glycyl thioester intermediate.

This sequence belongs to the ubiquitin-conjugating enzyme family. In terms of assembly, interacts with the E3 ubiquitin-protein ligases MBR1 and MBR2. In terms of tissue distribution, ubiquitously expressed. Mainly in petals.

It catalyses the reaction S-ubiquitinyl-[E1 ubiquitin-activating enzyme]-L-cysteine + [E2 ubiquitin-conjugating enzyme]-L-cysteine = [E1 ubiquitin-activating enzyme]-L-cysteine + S-ubiquitinyl-[E2 ubiquitin-conjugating enzyme]-L-cysteine.. It participates in protein modification; protein ubiquitination. Its function is as follows. Accepts the ubiquitin from the E1 complex and catalyzes its covalent attachment to other proteins. Mediates the selective degradation of short-lived and abnormal proteins. This chain is Ubiquitin-conjugating enzyme E2 11 (UBC11), found in Arabidopsis thaliana (Mouse-ear cress).